A 90-amino-acid chain; its full sequence is UPF0213 protein lmo0166 (90 aa).

Positions 5–80 constitute a GIY-YIG domain; it reads SEHFFYVLKC…KKLSRKNKDA (76 aa).

This sequence belongs to the UPF0213 family.

The sequence is that of UPF0213 protein lmo0166 from Listeria monocytogenes serovar 1/2a (strain ATCC BAA-679 / EGD-e).